We begin with the raw amino-acid sequence, 102 residues long: UPF0122 protein MPN_424 (102 aa).

It belongs to the UPF0122 family.

Might take part in the signal recognition particle (SRP) pathway. This is inferred from the conservation of its genetic proximity to ftsY/ffh. May be a regulatory protein. In Mycoplasma pneumoniae (strain ATCC 29342 / M129 / Subtype 1) (Mycoplasmoides pneumoniae), this protein is UPF0122 protein MPN_424.